A 465-amino-acid polypeptide reads, in one-letter code: Cysteine--tRNA ligase (465 aa).

Cys-30 serves as a coordination point for Zn(2+). A 'HIGH' region motif is present at residues 32-42; the sequence is ITVYDYCHVGH. Residues Cys-214, His-239, and Glu-243 each contribute to the Zn(2+) site. Positions 271–275 match the 'KMSKS' region motif; the sequence is KMSKS. Lys-274 provides a ligand contact to ATP.

This sequence belongs to the class-I aminoacyl-tRNA synthetase family. As to quaternary structure, monomer. Zn(2+) is required as a cofactor.

It localises to the cytoplasm. It carries out the reaction tRNA(Cys) + L-cysteine + ATP = L-cysteinyl-tRNA(Cys) + AMP + diphosphate. This chain is Cysteine--tRNA ligase, found in Burkholderia multivorans (strain ATCC 17616 / 249).